The chain runs to 524 residues: Chitinase D (524 aa).

The signal sequence occupies residues 1–30 (MNQAVRFRPVITFALAFILIITWFAPRADA). Positions 95–180 (VPAGLTSSLV…TSLSVTTSTG (86 aa)) constitute a Fibronectin type-III domain. One can recognise a GH18 domain in the interval 190-514 (KWLIGYWHNF…NAHRPFLNGL (325 aa)). The active-site Proton donor is Glu303.

It belongs to the glycosyl hydrolase 18 family. Chitinase class II subfamily.

The enzyme catalyses Random endo-hydrolysis of N-acetyl-beta-D-glucosaminide (1-&gt;4)-beta-linkages in chitin and chitodextrins.. The chain is Chitinase D (chiD) from Niallia circulans (Bacillus circulans).